The chain runs to 287 residues: L-ascorbate peroxidase 3 (287 aa).

Ala-2 is modified (N-acetylalanine). His-40 functions as the Proton acceptor in the catalytic mechanism. A disordered region spans residues 46 to 66; sequence DAQSKTGGPNGSIRNEEEHTH. His-160 is a binding site for heme b. Thr-161, Thr-177, and Asp-184 together coordinate K(+). Residues 259–279 traverse the membrane as a helical segment; the sequence is ILAQSAFGVAVAAAVVAFGYF. Positions 281-287 match the AKR2A-binding sequence (ABS) required for peroxisome membrane targeting motif; it reads EIRKRMK.

This sequence belongs to the peroxidase family. Ascorbate peroxidase subfamily. As to quaternary structure, interacts via its C-terminal region with AKR2A and AKR2B. The cofactor is heme b.

It localises to the peroxisome membrane. Its subcellular location is the glyoxysome membrane. It carries out the reaction L-ascorbate + H2O2 = L-dehydroascorbate + 2 H2O. Functionally, plays a key role in hydrogen peroxide removal. This Arabidopsis thaliana (Mouse-ear cress) protein is L-ascorbate peroxidase 3 (APX3).